Reading from the N-terminus, the 429-residue chain is Histidine--tRNA ligase (429 aa).

Belongs to the class-II aminoacyl-tRNA synthetase family. In terms of assembly, homodimer.

It localises to the cytoplasm. It catalyses the reaction tRNA(His) + L-histidine + ATP = L-histidyl-tRNA(His) + AMP + diphosphate + H(+). This chain is Histidine--tRNA ligase, found in Stutzerimonas stutzeri (strain A1501) (Pseudomonas stutzeri).